Consider the following 332-residue polypeptide: Holliday junction branch migration complex subunit RuvB (332 aa).

The large ATPase domain (RuvB-L) stretch occupies residues 1–181 (MARILDNNVM…FGITGHMEYY (181 aa)). ATP-binding positions include L20, R21, G62, K65, T66, T67, 128-130 (EDF), R171, Y181, and R218. T66 contacts Mg(2+). The tract at residues 182–252 (QEKDLTEIVE…ITDRALTMLD (71 aa)) is small ATPAse domain (RuvB-S). Residues 255–332 (REGLDYIDQK…RHLGYPYQNT (78 aa)) form a head domain (RuvB-H) region. Residues R291, R310, R312, and R315 each coordinate DNA.

This sequence belongs to the RuvB family. As to quaternary structure, homohexamer. Forms an RuvA(8)-RuvB(12)-Holliday junction (HJ) complex. HJ DNA is sandwiched between 2 RuvA tetramers; dsDNA enters through RuvA and exits via RuvB. An RuvB hexamer assembles on each DNA strand where it exits the tetramer. Each RuvB hexamer is contacted by two RuvA subunits (via domain III) on 2 adjacent RuvB subunits; this complex drives branch migration. In the full resolvosome a probable DNA-RuvA(4)-RuvB(12)-RuvC(2) complex forms which resolves the HJ.

It localises to the cytoplasm. It carries out the reaction ATP + H2O = ADP + phosphate + H(+). The RuvA-RuvB-RuvC complex processes Holliday junction (HJ) DNA during genetic recombination and DNA repair, while the RuvA-RuvB complex plays an important role in the rescue of blocked DNA replication forks via replication fork reversal (RFR). RuvA specifically binds to HJ cruciform DNA, conferring on it an open structure. The RuvB hexamer acts as an ATP-dependent pump, pulling dsDNA into and through the RuvAB complex. RuvB forms 2 homohexamers on either side of HJ DNA bound by 1 or 2 RuvA tetramers; 4 subunits per hexamer contact DNA at a time. Coordinated motions by a converter formed by DNA-disengaged RuvB subunits stimulates ATP hydrolysis and nucleotide exchange. Immobilization of the converter enables RuvB to convert the ATP-contained energy into a lever motion, pulling 2 nucleotides of DNA out of the RuvA tetramer per ATP hydrolyzed, thus driving DNA branch migration. The RuvB motors rotate together with the DNA substrate, which together with the progressing nucleotide cycle form the mechanistic basis for DNA recombination by continuous HJ branch migration. Branch migration allows RuvC to scan DNA until it finds its consensus sequence, where it cleaves and resolves cruciform DNA. This is Holliday junction branch migration complex subunit RuvB from Streptococcus pyogenes serotype M1.